The chain runs to 370 residues: Phosphoserine aminotransferase (370 aa).

At M1 the chain carries N-acetylmethionine. O-phospho-L-serine contacts are provided by H44 and R45. N6-acetyllysine is present on K51. Positions 79, 80, and 107 each coordinate pyridoxal 5'-phosphate. K127 is modified (N6-acetyllysine). Positions 156, 176, and 199 each coordinate pyridoxal 5'-phosphate. An N6-(pyridoxal phosphate)lysine modification is found at K200. 2 residues coordinate pyridoxal 5'-phosphate: N241 and T242. 3 positions are modified to N6-acetyllysine: K269, K318, and K323. Phosphoserine is present on S331. Residue K333 is modified to N6-acetyllysine. The O-phospho-L-serine site is built by H335, R336, and R342.

The protein belongs to the class-V pyridoxal-phosphate-dependent aminotransferase family. SerC subfamily. In terms of assembly, homodimer. It depends on pyridoxal 5'-phosphate as a cofactor.

It catalyses the reaction O-phospho-L-serine + 2-oxoglutarate = 3-phosphooxypyruvate + L-glutamate. Its pathway is amino-acid biosynthesis; L-serine biosynthesis; L-serine from 3-phospho-D-glycerate: step 2/3. In terms of biological role, involved in L-serine biosynthesis via the phosphorylated pathway, a three-step pathway converting the glycolytic intermediate 3-phospho-D-glycerate into L-serine. Catalyzes the second step, that is the pyridoxal 5'-phosphate-dependent transamination of 3-phosphohydroxypyruvate and L-glutamate to O-phosphoserine (OPS) and alpha-ketoglutarate. The sequence is that of Phosphoserine aminotransferase (PSAT1) from Oryctolagus cuniculus (Rabbit).